A 587-amino-acid polypeptide reads, in one-letter code: Proline-rich protein 14 (587 aa).

M1 is modified (N-acetylmethionine). A compositionally biased stretch (polar residues) spans 1–11 (MDLPGDSSTPG). Disordered stretches follow at residues 1-48 (MDLP…EKAS), 65-152 (VPLE…HQPT), and 181-241 (ARRA…RPRL). The interval 1–135 (MDLPGDSSTP…TPRRQSRTTP (135 aa)) is sufficient for heterochromatin association in interphase and chromatin association in anaphase. Residues 85–378 (SVRSQPPASP…MAKAPPPPRP (294 aa)) form a required for the interaction with GRB2 and sufficient to promote the phosphorylation of AKT and cell proliferation region. A required for nuclear lamina association region spans residues 136–365 (GPDEGPSQKV…RPRPRRHTVG (230 aa)). The segment covering 200-214 (LPAPSRPSALSANPL) has biased composition (low complexity). Residues 215-234 (ASPPPAPDPVLEPPSTPPPS) show a composition bias toward pro residues. The residue at position 277 (S277) is a Phosphoserine. Disordered regions lie at residues 290–444 (EAGQ…IGKV) and 524–587 (FRDS…PHRT). A compositionally biased stretch (polar residues) spans 314 to 325 (AQDQNPSATLTK). A compositionally biased stretch (pro residues) spans 337-356 (LGPPGPDPCSWPPVPAPSSR). Residues 398-410 (TSCSSTASTSSFS) are compositionally biased toward low complexity. The segment at 519 to 536 (RRTVEFRDSSLPRSRRPS) is required for nuclear localization. Residues 538–548 (GARATAGRTLP) are compositionally biased toward low complexity. The segment covering 572–581 (LLEEEEEGDQ) has biased composition (acidic residues).

As to quaternary structure, interacts (via proline-rich region) with GRB2 (via SH3 domain 2). Interacts (via N-terminus) with CBX5.

It is found in the chromosome. The protein localises to the nucleus. It localises to the nucleus lamina. The protein resides in the nucleoplasm. In terms of biological role, functions in tethering peripheral heterochromatin to the nuclear lamina during interphase, possibly through the interaction with heterochromatin protein CBX5/HP1 alpha. Might play a role in reattaching heterochromatin to the nuclear lamina at mitotic exit. Promotes myoblast differentiation during skeletal myogenesis, possibly by stimulating transcription factor MyoD activity via binding to CBX5/HP1 alpha. Involved in the positive regulation of the PI3K-Akt-mTOR signaling pathway and in promoting cell proliferation, possibly via binding to GRB2. The protein is Proline-rich protein 14 (PRR14) of Bos taurus (Bovine).